The following is an 87-amino-acid chain: CRISPR-associated endoribonuclease Cas2 (87 aa).

D8 is a binding site for Mg(2+).

It belongs to the CRISPR-associated endoribonuclease Cas2 protein family. In terms of assembly, homodimer, forms a heterotetramer with a Cas1 homodimer. It depends on Mg(2+) as a cofactor.

CRISPR (clustered regularly interspaced short palindromic repeat), is an adaptive immune system that provides protection against mobile genetic elements (viruses, transposable elements and conjugative plasmids). CRISPR clusters contain sequences complementary to antecedent mobile elements and target invading nucleic acids. CRISPR clusters are transcribed and processed into CRISPR RNA (crRNA). Functions as a ssRNA-specific endoribonuclease. Involved in the integration of spacer DNA into the CRISPR cassette. This Dictyoglomus turgidum (strain DSM 6724 / Z-1310) protein is CRISPR-associated endoribonuclease Cas2.